Here is a 165-residue protein sequence, read N- to C-terminus: UPF0303 protein BceJ2315_15790 (165 aa).

It belongs to the UPF0303 family.

In Burkholderia cenocepacia (strain ATCC BAA-245 / DSM 16553 / LMG 16656 / NCTC 13227 / J2315 / CF5610) (Burkholderia cepacia (strain J2315)), this protein is UPF0303 protein BceJ2315_15790.